Consider the following 185-residue polypeptide: Ribosome-recycling factor (185 aa).

This sequence belongs to the RRF family.

The protein resides in the cytoplasm. Its function is as follows. Responsible for the release of ribosomes from messenger RNA at the termination of protein biosynthesis. May increase the efficiency of translation by recycling ribosomes from one round of translation to another. This chain is Ribosome-recycling factor, found in Aliivibrio fischeri (strain MJ11) (Vibrio fischeri).